The chain runs to 942 residues: Cilia- and flagella-associated protein 69 (942 aa).

Residues 1 to 16 are compositionally biased toward low complexity; sequence MSTAEASATTADAAEA. A disordered region spans residues 1-25; it reads MSTAEASATTADAAEAGGRTKTGSP.

Expressed in ciliated olfactory sensory neurons (at protein level). Expressed in testis, specifically in sperm (at protein level).

It is found in the cell projection. Its subcellular location is the cilium. The protein resides in the flagellum. In terms of biological role, cilium- and flagellum-associated protein. In the olfactory epithelium, regulates the speed of activation and termination of the odor response and thus contributes to the robustness of olfactory transduction pathways. Required for sperm flagellum assembly and stability. This Mus musculus (Mouse) protein is Cilia- and flagella-associated protein 69.